Consider the following 383-residue polypeptide: Delta(12)-fatty-acid desaturase FAD2 (383 aa).

2 consecutive transmembrane segments (helical) span residues 56 to 76 (VVYDLTVAFIFYYIATNYFHL) and 84 to 104 (VAWPIYWALQGCVLTGVWVIA). The short motif at 105-109 (HECGH) is the Histidine box-1 element. A helical transmembrane segment spans residues 117–137 (LLDDIVGLVLHSCLLVPYFSW). Positions 141–145 (HRRHH) match the Histidine box-2 motif. Helical transmembrane passes span 179-199 (LFTLTITLTLGWPLYLAFNVS), 225-245 (IYISDAGVLAVTFGLYRLAAA), and 249-269 (AWVICVYGVPLLIVNAFLVMI). A Histidine box-3 motif is present at residues 315–319 (HVAHH).

It belongs to the fatty acid desaturase type 1 family. In terms of tissue distribution, expressed in leaves and seeds.

The protein localises to the endoplasmic reticulum membrane. It carries out the reaction (9Z)-octadecenoyl-CoA + 2 Fe(II)-[cytochrome b5] + O2 + 2 H(+) = (9Z,12Z)-octadecadienoyl-CoA + 2 Fe(III)-[cytochrome b5] + 2 H2O. The catalysed reaction is (9Z)-hexadecenoyl-CoA + 2 Fe(II)-[cytochrome b5] + O2 + 2 H(+) = (9Z,12Z)-hexadecadienoyl-CoA + 2 Fe(III)-[cytochrome b5] + 2 H2O. It functions in the pathway lipid metabolism; polyunsaturated fatty acid biosynthesis. In terms of biological role, catalyzes the desaturation of oleic acid (18:1(9Z)) to linoleic acid (18:2(9Z,12Z)). The protein is Delta(12)-fatty-acid desaturase FAD2 of Vernicia fordii (Tung).